The primary structure comprises 262 residues: uncharacterized protein (262 aa).

A BTB domain is found at 5 to 107; it reads PLISLDVEGV…MIEHKLRTFC (103 aa). A CRIB domain is found at 182-195; that stretch reads ISLPRNFTHIAHVG.

This is an uncharacterized protein from Caenorhabditis elegans.